We begin with the raw amino-acid sequence, 561 residues long: Glutamate--tRNA ligase (561 aa).

The 'HIGH' region signature appears at 107 to 117 (PNPSGPLHLGH).

This sequence belongs to the class-I aminoacyl-tRNA synthetase family. Glutamate--tRNA ligase type 2 subfamily.

It localises to the cytoplasm. It carries out the reaction tRNA(Glu) + L-glutamate + ATP = L-glutamyl-tRNA(Glu) + AMP + diphosphate. Functionally, catalyzes the attachment of glutamate to tRNA(Glu) in a two-step reaction: glutamate is first activated by ATP to form Glu-AMP and then transferred to the acceptor end of tRNA(Glu). The protein is Glutamate--tRNA ligase of Methanoculleus marisnigri (strain ATCC 35101 / DSM 1498 / JR1).